The sequence spans 62 residues: uncharacterized protein (62 aa).

Positions 1–22 are cleaved as a signal peptide; the sequence is MVNVALLLDQIIATPLRSMVEA.

This is an uncharacterized protein from Archaeoglobus fulgidus (strain ATCC 49558 / DSM 4304 / JCM 9628 / NBRC 100126 / VC-16).